Here is a 313-residue protein sequence, read N- to C-terminus: Dehydrogenase/reductase SDR family member 1 (313 aa).

An NAD(+)-binding site is contributed by isoleucine 19. Residue arginine 21 is modified to Omega-N-methylarginine. Aspartate 64 lines the NAD(+) pocket. Serine 151 lines the substrate pocket. Tyrosine 163, lysine 167, and threonine 198 together coordinate NAD(+). The active-site Proton acceptor is the tyrosine 163.

Belongs to the short-chain dehydrogenases/reductases (SDR) family.

It localises to the endoplasmic reticulum. The enzyme catalyses 17alpha-estradiol + NADP(+) = estrone + NADPH + H(+). It catalyses the reaction testosterone + NADP(+) = androst-4-ene-3,17-dione + NADPH + H(+). It carries out the reaction prostaglandin E1 + NADPH + H(+) = prostaglandin F1 + NADP(+). The catalysed reaction is isatin + NADPH + H(+) = 3-hydroxyindolin-2-one + NADP(+). In terms of biological role, NADPH-dependent oxidoreductase which catalyzes the reduction of some steroids (estrone, androstene-3,17-dione and cortisone) as well as prostaglandin E1, isatin and xenobiotics in vitro. May have a role in steroid and/or xenobiotic metabolism. This is Dehydrogenase/reductase SDR family member 1 from Mus musculus (Mouse).